The chain runs to 338 residues: 1-aminocyclopropane-1-carboxylate deaminase (338 aa).

The residue at position 51 (Lys-51) is an N6-(pyridoxal phosphate)lysine. Catalysis depends on Ser-78, which acts as the Nucleophile.

Belongs to the ACC deaminase/D-cysteine desulfhydrase family. As to quaternary structure, homotrimer. It depends on pyridoxal 5'-phosphate as a cofactor.

It carries out the reaction 1-aminocyclopropane-1-carboxylate + H2O = 2-oxobutanoate + NH4(+). Its function is as follows. Catalyzes a cyclopropane ring-opening reaction, the irreversible conversion of 1-aminocyclopropane-1-carboxylate (ACC) to ammonia and alpha-ketobutyrate. Allows growth on ACC as a nitrogen source. The chain is 1-aminocyclopropane-1-carboxylate deaminase from Burkholderia multivorans (strain ATCC 17616 / 249).